Consider the following 97-residue polypeptide: UPF0298 protein MGAS9429_Spy0329 (97 aa).

It belongs to the UPF0298 family.

Its subcellular location is the cytoplasm. The sequence is that of UPF0298 protein MGAS9429_Spy0329 from Streptococcus pyogenes serotype M12 (strain MGAS9429).